A 111-amino-acid chain; its full sequence is uncharacterized protein (111 aa).

Positions 1–85 (MTGLMKAFQK…TSSREDEQKL (85 aa)) are disordered. Residues 11-23 (LSPTKRQYAEITQ) show a composition bias toward polar residues. The segment covering 24-42 (SNSSISSSSSGSKYNDSSS) has biased composition (low complexity). A compositionally biased stretch (polar residues) spans 56–77 (ARASTSTQAQKPASSQQKGGTS).

This is an uncharacterized protein from Microplitis demolitor (Parasitoid wasp).